The sequence spans 508 residues: Hydroxymethylglutaryl-CoA synthase, mitochondrial (508 aa).

Residues 1 to 37 (MQRLLTPVRQVLQVKRVMQEASLLPARLLPAAHPSFS) constitute a mitochondrion transit peptide. Lys52 carries the post-translational modification N6-succinyllysine. Residues Glu80 and Ala81 each coordinate (3S)-3-hydroxy-3-methylglutaryl-CoA. Catalysis depends on Glu132, which acts as the Proton donor/acceptor. 3 residues coordinate (3S)-3-hydroxy-3-methylglutaryl-CoA: Cys166, Asn204, and Thr208. Cys166 (acyl-thioester intermediate) is an active-site residue. The residue at position 243 (Lys243) is an N6-acetyllysine. Lys256 carries the post-translational modification N6-acetyllysine; alternate. N6-succinyllysine; alternate is present on Lys256. 2 residues coordinate (3S)-3-hydroxy-3-methylglutaryl-CoA: Ser258 and His301. His301 acts as the Proton donor/acceptor in catalysis. Residue Lys306 is modified to N6-acetyllysine. Lys310 serves as a coordination point for (3S)-3-hydroxy-3-methylglutaryl-CoA. Lys310 is subject to N6-acetyllysine; alternate. Residue Lys310 is modified to N6-succinyllysine; alternate. Lys333 bears the N6-succinyllysine mark. N6-acetyllysine; alternate is present on residues Lys342, Lys350, Lys354, and Lys358. An N6-succinyllysine; alternate mark is found at Lys342, Lys350, Lys354, and Lys358. (3S)-3-hydroxy-3-methylglutaryl-CoA is bound by residues Asn380 and Ser414. Ser433 bears the Phosphoserine mark. Lys437 bears the N6-acetyllysine mark. Ser440 is modified (phosphoserine). Residue Lys447 is modified to N6-acetyllysine; alternate. Position 447 is an N6-succinyllysine; alternate (Lys447). At Ser456 the chain carries Phosphoserine. Residue Lys473 is modified to N6-acetyllysine; alternate. Lys473 carries the N6-succinyllysine; alternate modification. At Ser477 the chain carries Phosphoserine.

The protein belongs to the thiolase-like superfamily. HMG-CoA synthase family. As to quaternary structure, homodimer. Succinylated. Desuccinylated by SIRT5. Succinylation, at least at Lys-310, inhibits the enzymatic activity.

It is found in the mitochondrion. The enzyme catalyses acetoacetyl-CoA + acetyl-CoA + H2O = (3S)-3-hydroxy-3-methylglutaryl-CoA + CoA + H(+). The protein operates within metabolic intermediate biosynthesis; (R)-mevalonate biosynthesis; (R)-mevalonate from acetyl-CoA: step 2/3. Functionally, catalyzes the first irreversible step in ketogenesis, condensing acetyl-CoA to acetoacetyl-CoA to form HMG-CoA, which is converted by HMG-CoA reductase (HMGCR) into mevalonate. In Bos taurus (Bovine), this protein is Hydroxymethylglutaryl-CoA synthase, mitochondrial (HMGCS2).